Consider the following 342-residue polypeptide: N-acetyl-gamma-glutamyl-phosphate reductase (342 aa).

Residue C149 is part of the active site.

It belongs to the NAGSA dehydrogenase family. Type 1 subfamily.

The protein resides in the cytoplasm. It carries out the reaction N-acetyl-L-glutamate 5-semialdehyde + phosphate + NADP(+) = N-acetyl-L-glutamyl 5-phosphate + NADPH + H(+). It functions in the pathway amino-acid biosynthesis; L-arginine biosynthesis; N(2)-acetyl-L-ornithine from L-glutamate: step 3/4. In terms of biological role, catalyzes the NADPH-dependent reduction of N-acetyl-5-glutamyl phosphate to yield N-acetyl-L-glutamate 5-semialdehyde. This is N-acetyl-gamma-glutamyl-phosphate reductase from Jannaschia sp. (strain CCS1).